A 231-amino-acid chain; its full sequence is Orotidine 5'-phosphate decarboxylase (231 aa).

Residues Asp-12, Lys-34, 61–70, Thr-120, Arg-181, Gln-190, Gly-210, and Arg-211 contribute to the substrate site; that span reads DLKFHDIPNT. Lys-63 (proton donor) is an active-site residue.

It belongs to the OMP decarboxylase family. Type 1 subfamily. Homodimer.

It catalyses the reaction orotidine 5'-phosphate + H(+) = UMP + CO2. It functions in the pathway pyrimidine metabolism; UMP biosynthesis via de novo pathway; UMP from orotate: step 2/2. Its function is as follows. Catalyzes the decarboxylation of orotidine 5'-monophosphate (OMP) to uridine 5'-monophosphate (UMP). This Alcanivorax borkumensis (strain ATCC 700651 / DSM 11573 / NCIMB 13689 / SK2) protein is Orotidine 5'-phosphate decarboxylase.